A 337-amino-acid chain; its full sequence is Inositol 2-dehydrogenase (337 aa).

It belongs to the Gfo/Idh/MocA family. As to quaternary structure, homotetramer.

The catalysed reaction is myo-inositol + NAD(+) = scyllo-inosose + NADH + H(+). Involved in the oxidation of myo-inositol (MI) to 2-keto-myo-inositol (2KMI or 2-inosose). The protein is Inositol 2-dehydrogenase of Arthrobacter sp. (strain FB24).